The primary structure comprises 311 residues: GTP cyclohydrolase MptA (311 aa).

It belongs to the GTP cyclohydrolase IV family. In terms of assembly, homodimer. It depends on Fe(2+) as a cofactor.

The catalysed reaction is GTP + H2O = 7,8-dihydroneopterin 2',3'-cyclic phosphate + formate + diphosphate + H(+). It functions in the pathway cofactor biosynthesis; 5,6,7,8-tetrahydromethanopterin biosynthesis. Functionally, converts GTP to 7,8-dihydro-D-neopterin 2',3'-cyclic phosphate, the first intermediate in the biosynthesis of coenzyme methanopterin. The polypeptide is GTP cyclohydrolase MptA (Methanobrevibacter smithii (strain ATCC 35061 / DSM 861 / OCM 144 / PS)).